The primary structure comprises 311 residues: Lipoyl synthase (311 aa).

Positions 47, 52, 58, 73, 77, 80, and 286 each coordinate [4Fe-4S] cluster. Residues 59–276 form the Radical SAM core domain; the sequence is WSRHTATYLA…RSVGESLGLF (218 aa).

This sequence belongs to the radical SAM superfamily. Lipoyl synthase family. [4Fe-4S] cluster is required as a cofactor.

The protein resides in the cytoplasm. The enzyme catalyses [[Fe-S] cluster scaffold protein carrying a second [4Fe-4S](2+) cluster] + N(6)-octanoyl-L-lysyl-[protein] + 2 oxidized [2Fe-2S]-[ferredoxin] + 2 S-adenosyl-L-methionine + 4 H(+) = [[Fe-S] cluster scaffold protein] + N(6)-[(R)-dihydrolipoyl]-L-lysyl-[protein] + 4 Fe(3+) + 2 hydrogen sulfide + 2 5'-deoxyadenosine + 2 L-methionine + 2 reduced [2Fe-2S]-[ferredoxin]. It participates in protein modification; protein lipoylation via endogenous pathway; protein N(6)-(lipoyl)lysine from octanoyl-[acyl-carrier-protein]: step 2/2. In terms of biological role, catalyzes the radical-mediated insertion of two sulfur atoms into the C-6 and C-8 positions of the octanoyl moiety bound to the lipoyl domains of lipoate-dependent enzymes, thereby converting the octanoylated domains into lipoylated derivatives. The protein is Lipoyl synthase of Chlamydia trachomatis serovar L2 (strain ATCC VR-902B / DSM 19102 / 434/Bu).